The primary structure comprises 127 residues: Small ribosomal subunit protein eS8 (127 aa).

Residues 1 to 31 form a disordered region; it reads MTIFQGKSGKKATGGSLKQSRKKRRFELGRE.

Belongs to the eukaryotic ribosomal protein eS8 family. As to quaternary structure, part of the 30S ribosomal subunit.

In Thermoplasma acidophilum (strain ATCC 25905 / DSM 1728 / JCM 9062 / NBRC 15155 / AMRC-C165), this protein is Small ribosomal subunit protein eS8 (rps8e).